A 351-amino-acid polypeptide reads, in one-letter code: D-alanine--D-alanine ligase (351 aa).

The 209-residue stretch at 135-343 (NQIFLQSGQK…MEEVFADLIE (209 aa)) folds into the ATP-grasp domain. Residue 167–222 (LMSLGFPQFLKPVEGGSSVSTYKITNQEQLSRQLALIFESDSKVMSQSFLAGTEVS) coordinates ATP. Asp298, Glu310, and Asn312 together coordinate Mg(2+).

This sequence belongs to the D-alanine--D-alanine ligase family. The cofactor is Mg(2+). Mn(2+) is required as a cofactor.

It is found in the cytoplasm. The catalysed reaction is 2 D-alanine + ATP = D-alanyl-D-alanine + ADP + phosphate + H(+). Its pathway is cell wall biogenesis; peptidoglycan biosynthesis. Cell wall formation. The chain is D-alanine--D-alanine ligase from Leptospira borgpetersenii serovar Hardjo-bovis (strain JB197).